The chain runs to 411 residues: MKRQNVRTLALIVCTFTYLLVGAAVFDALESEPEMIERQRLELRQLELRARYNLSEGGYEELERVVLRLKPHKAGVQWRFAGSFYFAITVITTIGYGHAAPSTDGGKVFCMFYALLGIPLTLVMFQSLGERINTFVRYLLHRAKRGLGMRHAEVSMANMVLIGFVSCISTLCIGAAAFSYYERWTFFQAYYYCFITLTTIGFGDYVALQKDQALQTQPQYVAFSFVYILTGLTVIGAFLNLVVLRFMTMNAEDEKRDAEHRALLTHNGQAGGLGGLSCLSGSLGDGVRPRDPVTCAAAAGGMGVGVGVGGSGFRNVYAEMLHFQSMCSCLWYKSREKLQYSIPMIIPRDLSTSDTCVEHSHSSPGGGGRYSDTPSHPCLCSGTQRSAISSVSTGLHSLATFRGLMKRRSSV.

Over 1–8 (MKRQNVRT) the chain is Cytoplasmic. A helical membrane pass occupies residues 9 to 29 (LALIVCTFTYLLVGAAVFDAL). N53 carries N-linked (GlcNAc...) asparagine glycosylation. Positions 78 to 101 (WRFAGSFYFAITVITTIGYGHAAP) form an intramembrane region, pore-forming. Residues 108–128 (VFCMFYALLGIPLTLVMFQSL) traverse the membrane as a helical segment. Over 129-158 (GERINTFVRYLLHRAKRGLGMRHAEVSMAN) the chain is Cytoplasmic. A helical membrane pass occupies residues 159 to 179 (MVLIGFVSCISTLCIGAAAFS). The pore-forming intramembrane region spans 184–207 (WTFFQAYYYCFITLTTIGFGDYVA). Residues 223 to 243 (FSFVYILTGLTVIGAFLNLVV) form a helical membrane-spanning segment. Residues 244–411 (LRFMTMNAED…RGLMKRRSSV (168 aa)) are Cytoplasmic-facing.

Belongs to the two pore domain potassium channel (TC 1.A.1.8) family. As to quaternary structure, homodimer. Heterodimer with KCNK1. Heterodimer with KCNK9. Strongest expression in heart. Moderate expression in lung and brain. Low levels in liver, kidney and skeletal muscle. Expressed in cerebellar granule cells (at protein level).

Its subcellular location is the cell membrane. It catalyses the reaction K(+)(in) = K(+)(out). It carries out the reaction Na(+)(in) = Na(+)(out). Its activity is regulated as follows. Inhibited by extracellular acidification, muscarinic signaling, divalent metal cations Zn(2+) and Ba(2+), isoflurane, bupivacaine and phenytoin. Activated by protein kinase A. Ruthenium red resistant. Its function is as follows. K(+) channel that conducts voltage-dependent outward rectifying currents upon membrane depolarization. Voltage sensing is coupled to K(+) electrochemical gradient in an 'ion flux gating' mode where outward but not inward ion flow opens the gate. Changes ion selectivity and becomes permeable to Na(+) ions in response to extracellular acidification. Protonation of the pH sensor His-98 stabilizes C-type inactivation conformation likely converting the channel from outward K(+)-conducting, to inward Na(+)-conducting to nonconductive state. Homo- and heterodimerizes to form functional channels with distinct regulatory and gating properties. Allows K(+) currents with fast-gating kinetics important for the repolarization and hyperpolarization phases of action potentials. In cerebellar granule cells, heteromeric KCNK3:KCNK9 channel may hyperpolarize the resting membrane potential to limit intrinsic neuronal excitability, but once the action potential threshold is reached, it may support high-frequency action potential firing and increased neuronal excitability. Dispensable for central chemosensory respiration i.e. breathing controlled by brainstem CO2/pH, it rather conducts pH-sensitive currents and controls the firing rate of serotonergic raphe neurons involved in potentiation of the respiratory chemoreflex. Additionally, imparts chemosensitivity to type 1 cells in carotid bodies which respond to a decrease in arterial oxygen pressure or an increase in carbon dioxide pressure or pH to initiate adaptive changes in pulmonary ventilation. In adrenal gland, contributes to the maintenance of a hyperpolarized resting membrane potential of aldosterone-producing cells at zona glomerulosa and limits aldosterone release as part of a regulatory mechanism that controls arterial blood pressure and electrolyte homeostasis. In brown adipocytes, mediates K(+) efflux that counteracts norepinephrine-induced membrane depolarization, limits Ca(2+) efflux and downstream cAMP and PKA signaling, ultimately attenuating lipid oxidation and adaptive thermogenesis. This chain is Potassium channel subfamily K member 3, found in Rattus norvegicus (Rat).